A 528-amino-acid chain; its full sequence is Intestinal-type alkaline phosphatase (528 aa).

A signal peptide spans Met-1–Gly-19. Asp-61 provides a ligand contact to Mg(2+). Asp-61 and Ser-111 together coordinate Zn(2+). The active-site Phosphoserine intermediate is the Ser-111. The cysteines at positions 140 and 202 are disulfide-linked. Asn-141 carries N-linked (GlcNAc...) asparagine glycosylation. Ser-174 contacts Mg(2+). Glu-235 is a binding site for Ca(2+). Asn-268 is a glycosylation site (N-linked (GlcNAc...) asparagine). Ca(2+)-binding residues include Phe-288, Glu-289, and Asp-304. Glu-330 contacts Mg(2+). 4 residues coordinate Zn(2+): Asp-335, His-339, Asp-376, and His-377. An N-linked (GlcNAc...) asparagine glycan is attached at Asn-429. Position 451 (His-451) interacts with Zn(2+). Cys-486 and Cys-493 form a disulfide bridge. A lipid anchor (GPI-anchor amidated aspartate) is attached at Asp-503. Residues Ala-504–Pro-528 constitute a propeptide, removed in mature form.

It belongs to the alkaline phosphatase family. Homodimer. It depends on Mg(2+) as a cofactor. Requires Zn(2+) as cofactor. Ca(2+) serves as cofactor.

Its subcellular location is the cell membrane. It carries out the reaction a phosphate monoester + H2O = an alcohol + phosphate. Alkaline phosphatase that can hydrolyze various phosphate compounds. This is Intestinal-type alkaline phosphatase (ALPI) from Homo sapiens (Human).